The primary structure comprises 136 residues: Histone H2A (136 aa).

A compositionally biased stretch (gly residues) spans 1 to 11; sequence MTGGGKSGGKA. Positions 1–24 are disordered; that stretch reads MTGGGKSGGKASGSKNAQSRSSKA. Residues K6 and K10 each carry the N6-acetyllysine modification. N5-methylglutamine is present on Q107. At S133 the chain carries Phosphoserine. A [ST]-Q motif motif is present at residues 133–134; that stretch reads SQ.

Belongs to the histone H2A family. As to quaternary structure, the nucleosome is a histone octamer containing two molecules each of H2A, H2B, H3 and H4 assembled in one H3-H4 heterotetramer and two H2A-H2B heterodimers. The octamer wraps approximately 147 bp of DNA. In terms of processing, phosphorylated to form H2AS128ph (gamma-H2A) in response to DNA double-strand breaks (DSBs) generated by exogenous genotoxic agents and by stalled replication forks. Phosphorylation is dependent on the DNA damage checkpoint kinases MEC1/ATR and TEL1/ATM, spreads on either side of a detected DSB site and may mark the surrounding chromatin for recruitment of proteins required for DNA damage signaling and repair. Gamma-H2A is removed from the DNA prior to the strand invasion-primer extension step of the repair process and subsequently dephosphorylated. Dephosphorylation is necessary for efficient recovery from the DNA damage checkpoint. Post-translationally, acetylated by ESA1 to form H2AK4ac and H2AK7ac.

The protein localises to the nucleus. It localises to the chromosome. Core component of nucleosome which plays a central role in DNA double strand break (DSB) repair. Nucleosomes wrap and compact DNA into chromatin, limiting DNA accessibility to the cellular machineries which require DNA as a template. Histones thereby play a central role in transcription regulation, DNA repair, DNA replication and chromosomal stability. DNA accessibility is regulated via a complex set of post-translational modifications of histones, also called histone code, and nucleosome remodeling. This chain is Histone H2A (HTA1), found in Pyricularia oryzae (strain Y34) (Rice blast fungus).